The chain runs to 128 residues: Small ribosomal subunit protein eS6 (128 aa).

It belongs to the eukaryotic ribosomal protein eS6 family.

This chain is Small ribosomal subunit protein eS6, found in Thermoplasma volcanium (strain ATCC 51530 / DSM 4299 / JCM 9571 / NBRC 15438 / GSS1).